The primary structure comprises 189 residues: Probable nicotinate-nucleotide adenylyltransferase (189 aa).

This sequence belongs to the NadD family.

The catalysed reaction is nicotinate beta-D-ribonucleotide + ATP + H(+) = deamido-NAD(+) + diphosphate. Its pathway is cofactor biosynthesis; NAD(+) biosynthesis; deamido-NAD(+) from nicotinate D-ribonucleotide: step 1/1. Functionally, catalyzes the reversible adenylation of nicotinate mononucleotide (NaMN) to nicotinic acid adenine dinucleotide (NaAD). The sequence is that of Probable nicotinate-nucleotide adenylyltransferase from Bacillus mycoides (strain KBAB4) (Bacillus weihenstephanensis).